Consider the following 464-residue polypeptide: MDVVIMAAGKGTRMKSKLPKVLHLLAGRALLQHVVDTAAQLSARQVVVITGHGAMEVEAAVSGNTGASAGFDINFVRQEPQLGTGHAVQQAVPLLRDDGMVVVLSGDVPLIQAATLRHLIAAAGTDKLALLTIDFADPTGYGRIVRRGDVVQAIVEQKDATPVQREITEVYSGIMALPARQLKAWLARLDKQNAQGEYYLTDIVKFAVADGVPVVAHKIADATQVAGVNSPVQLAALERAFQSKVALQLMEQGVRLADPARLDVRGQLHCAQDVSIDVNCVFEGVVTLGEGVKIGANCVIRNATIAAGAVIHPFTHIEGGQPGSKDAVEVGAGALIGPFARLRPGAKLGQAVHIGNFVEVKNSTLARGAKANHLAYLGDATVGERVNYGAGSITANYDGAFKHRTVLEADVHIGSNCVLIAPLTIGAGGTVGGGSTVTKDTPPGALTVARAKQVSIANWKRPSK.

The tract at residues 1–231 (MDVVIMAAGK…ATQVAGVNSP (231 aa)) is pyrophosphorylase. Residues Lys-20, Gln-78, 83-84 (GT), 105-107 (SGD), Gly-142, Glu-156, and Asn-229 contribute to the UDP-N-acetyl-alpha-D-glucosamine site. Asp-107 lines the Mg(2+) pocket. Asn-229 lines the Mg(2+) pocket. Positions 232–252 (VQLAALERAFQSKVALQLMEQ) are linker. Residues 253–464 (GVRLADPARL…SIANWKRPSK (212 aa)) are N-acetyltransferase. 2 residues coordinate UDP-N-acetyl-alpha-D-glucosamine: Arg-343 and Lys-361. His-373 functions as the Proton acceptor in the catalytic mechanism. Residues Tyr-376 and Asn-387 each contribute to the UDP-N-acetyl-alpha-D-glucosamine site. Acetyl-CoA-binding positions include Ala-390, 396 to 397 (NY), Ser-415, Gly-433, and Arg-450.

This sequence in the N-terminal section; belongs to the N-acetylglucosamine-1-phosphate uridyltransferase family. It in the C-terminal section; belongs to the transferase hexapeptide repeat family. As to quaternary structure, homotrimer. Mg(2+) serves as cofactor.

The protein localises to the cytoplasm. The catalysed reaction is alpha-D-glucosamine 1-phosphate + acetyl-CoA = N-acetyl-alpha-D-glucosamine 1-phosphate + CoA + H(+). It carries out the reaction N-acetyl-alpha-D-glucosamine 1-phosphate + UTP + H(+) = UDP-N-acetyl-alpha-D-glucosamine + diphosphate. It participates in nucleotide-sugar biosynthesis; UDP-N-acetyl-alpha-D-glucosamine biosynthesis; N-acetyl-alpha-D-glucosamine 1-phosphate from alpha-D-glucosamine 6-phosphate (route II): step 2/2. It functions in the pathway nucleotide-sugar biosynthesis; UDP-N-acetyl-alpha-D-glucosamine biosynthesis; UDP-N-acetyl-alpha-D-glucosamine from N-acetyl-alpha-D-glucosamine 1-phosphate: step 1/1. Its pathway is bacterial outer membrane biogenesis; LPS lipid A biosynthesis. In terms of biological role, catalyzes the last two sequential reactions in the de novo biosynthetic pathway for UDP-N-acetylglucosamine (UDP-GlcNAc). The C-terminal domain catalyzes the transfer of acetyl group from acetyl coenzyme A to glucosamine-1-phosphate (GlcN-1-P) to produce N-acetylglucosamine-1-phosphate (GlcNAc-1-P), which is converted into UDP-GlcNAc by the transfer of uridine 5-monophosphate (from uridine 5-triphosphate), a reaction catalyzed by the N-terminal domain. This chain is Bifunctional protein GlmU, found in Albidiferax ferrireducens (strain ATCC BAA-621 / DSM 15236 / T118) (Rhodoferax ferrireducens).